The following is a 254-amino-acid chain: Alcohol dehydrogenase (254 aa).

10-33 serves as a coordination point for NAD(+); it reads FVAGLGGIGFDTSREIVKSGPKNL. Residue S138 participates in substrate binding. Y151 (proton acceptor) is an active-site residue.

Belongs to the short-chain dehydrogenases/reductases (SDR) family. In terms of assembly, homodimer.

It catalyses the reaction a primary alcohol + NAD(+) = an aldehyde + NADH + H(+). The enzyme catalyses a secondary alcohol + NAD(+) = a ketone + NADH + H(+). The protein is Alcohol dehydrogenase (Adh) of Drosophila mayaguana (Fruit fly).